The following is a 92-amino-acid chain: uncharacterized protein (92 aa).

Homolog of shope fibroma virus T4A ORF. This is an uncharacterized protein from Swinepox virus (strain Kasza) (SWPV).